The primary structure comprises 269 residues: Tryptophan synthase alpha chain (269 aa).

Catalysis depends on proton acceptor residues E49 and D60.

The protein belongs to the TrpA family. As to quaternary structure, tetramer of two alpha and two beta chains.

The enzyme catalyses (1S,2R)-1-C-(indol-3-yl)glycerol 3-phosphate + L-serine = D-glyceraldehyde 3-phosphate + L-tryptophan + H2O. It participates in amino-acid biosynthesis; L-tryptophan biosynthesis; L-tryptophan from chorismate: step 5/5. In terms of biological role, the alpha subunit is responsible for the aldol cleavage of indoleglycerol phosphate to indole and glyceraldehyde 3-phosphate. The polypeptide is Tryptophan synthase alpha chain (Pseudomonas putida (strain ATCC 47054 / DSM 6125 / CFBP 8728 / NCIMB 11950 / KT2440)).